We begin with the raw amino-acid sequence, 511 residues long: Trafficking protein particle complex subunit 13 homolog (511 aa).

Belongs to the TRAPPC13 family.

This Dictyostelium discoideum (Social amoeba) protein is Trafficking protein particle complex subunit 13 homolog.